A 456-amino-acid polypeptide reads, in one-letter code: Ezy-1 protein (456 aa).

Positions 1 to 28 are cleaved as a signal peptide; the sequence is MQLSSSLRSARSAAASSGCALASRPVVA. Disordered regions lie at residues 167–189, 273–310, and 414–456; these read SDGG…DGDG, FTGK…GGSG, and QPAG…SPNM. A compositionally biased stretch (acidic residues) spans 281-293; the sequence is AEGDDGEDEEEGE. A compositionally biased stretch (basic and acidic residues) spans 418–428; sequence DGHEPEPKRPE.

The protein is Ezy-1 protein (Ezy-1) of Chlamydomonas reinhardtii (Chlamydomonas smithii).